The sequence spans 512 residues: ADP,ATP carrier protein 4 (512 aa).

Transmembrane regions (helical) follow at residues 34–54, 71–91, 102–122, 157–177, 192–212, 231–251, 296–316, 330–350, 361–381, 390–410, 448–468, and 476–496; these read ISKF…QNLI, ISFL…VMYV, IFYL…YVIF, FSLF…LLFW, FYPL…HFLE, FHTL…IVSI, LIAT…GPWK, AAFI…FVLL, FTSA…FFAF, LIIA…IGAI, VIGT…IFII, and SISI…IWAT.

It belongs to the ADP/ATP translocase tlc family.

The protein resides in the cell membrane. Functionally, provides the rickettsial cell with host ATP in exchange for rickettsial ADP. This is an obligate exchange system. This energy acquiring activity is an important component of rickettsial parasitism. This Rickettsia typhi (strain ATCC VR-144 / Wilmington) protein is ADP,ATP carrier protein 4 (tlcD).